The chain runs to 641 residues: Threonine--tRNA ligase (641 aa).

The TGS domain occupies 1 to 61 (MIKISFFDNQ…KKNGNLEILT (61 aa)). The interval 240–538 (DHKKINKELD…LVEETKGVFP (299 aa)) is catalytic. Zn(2+) contacts are provided by cysteine 334, histidine 385, and histidine 515.

Belongs to the class-II aminoacyl-tRNA synthetase family. Homodimer. It depends on Zn(2+) as a cofactor.

The protein resides in the cytoplasm. The catalysed reaction is tRNA(Thr) + L-threonine + ATP = L-threonyl-tRNA(Thr) + AMP + diphosphate + H(+). Functionally, catalyzes the attachment of threonine to tRNA(Thr) in a two-step reaction: L-threonine is first activated by ATP to form Thr-AMP and then transferred to the acceptor end of tRNA(Thr). Also edits incorrectly charged L-seryl-tRNA(Thr). In Aster yellows witches'-broom phytoplasma (strain AYWB), this protein is Threonine--tRNA ligase.